The chain runs to 177 residues: Large ribosomal subunit protein uL6 (177 aa).

It belongs to the universal ribosomal protein uL6 family. As to quaternary structure, part of the 50S ribosomal subunit.

Its function is as follows. This protein binds to the 23S rRNA, and is important in its secondary structure. It is located near the subunit interface in the base of the L7/L12 stalk, and near the tRNA binding site of the peptidyltransferase center. The chain is Large ribosomal subunit protein uL6 from Bradyrhizobium sp. (strain BTAi1 / ATCC BAA-1182).